We begin with the raw amino-acid sequence, 94 residues long: Protein S100-A1 (94 aa).

G2 carries the blocked amino end (Gly) modification. 2 consecutive EF-hand domains span residues 13–48 and 50–85; these read INVF…FLDA and KDAD…LTVA. The Ca(2+) site is built by K28, E33, D63, N65, D67, E69, and E74. C86 carries the S-nitrosocysteine modification.

This sequence belongs to the S-100 family. In terms of assembly, dimer of either two alpha chains, or two beta chains, or one alpha and one beta chain. Also forms heterodimers with S100P. Interacts with AGER. Interacts with CAPZA1. Interacts with FKBP4. Interacts with RYR1 and RYR2. Interacts with CACYBP in a calcium-dependent manner. Interacts with PPP5C (via TPR repeats); the interaction is calcium-dependent and modulates PPP5C activity. Interacts with ATP2A2 and PLN in a Ca(2+)-dependent manner. Interacts with mitochondrial F1-ATPase subunits ATP5F1A and ATP5F1B; these interactions increase F1-ATPase activity. Post-translationally, glutathionylated; glutathionylation increases affinity to calcium about 10-fold. In terms of tissue distribution, although predominant among the water-soluble brain proteins, S100 is also found in a variety of other tissues.

It is found in the cytoplasm. The protein resides in the sarcoplasmic reticulum. Its subcellular location is the mitochondrion. Its function is as follows. Small calcium binding protein that plays important roles in several biological processes such as Ca(2+) homeostasis, chondrocyte biology and cardiomyocyte regulation. In response to an increase in intracellular Ca(2+) levels, binds calcium which triggers conformational changes. These changes allow interactions with specific target proteins and modulate their activity. Regulates a network in cardiomyocytes controlling sarcoplasmic reticulum Ca(2+) cycling and mitochondrial function through interaction with the ryanodine receptors RYR1 and RYR2, sarcoplasmic reticulum Ca(2+)-ATPase/ATP2A2 and mitochondrial F1-ATPase. Facilitates diastolic Ca(2+) dissociation and myofilament mechanics in order to improve relaxation during diastole. The polypeptide is Protein S100-A1 (S100A1) (Bos taurus (Bovine)).